Reading from the N-terminus, the 200-residue chain is dTTP/UTP pyrophosphatase (200 aa).

The Proton acceptor role is filled by aspartate 76.

It belongs to the Maf family. YhdE subfamily. A divalent metal cation serves as cofactor.

It is found in the cytoplasm. It carries out the reaction dTTP + H2O = dTMP + diphosphate + H(+). The catalysed reaction is UTP + H2O = UMP + diphosphate + H(+). Its function is as follows. Nucleoside triphosphate pyrophosphatase that hydrolyzes dTTP and UTP. May have a dual role in cell division arrest and in preventing the incorporation of modified nucleotides into cellular nucleic acids. In Acetivibrio thermocellus (strain ATCC 27405 / DSM 1237 / JCM 9322 / NBRC 103400 / NCIMB 10682 / NRRL B-4536 / VPI 7372) (Clostridium thermocellum), this protein is dTTP/UTP pyrophosphatase.